Reading from the N-terminus, the 317-residue chain is 2,3-dihydroxyphenylpropionate/2,3-dihydroxicinnamic acid 1,2-dioxygenase (317 aa).

H115 serves as the catalytic Proton donor. Residue H179 is the Proton acceptor of the active site.

It belongs to the LigB/MhpB extradiol dioxygenase family. In terms of assembly, homotetramer. Requires Fe(2+) as cofactor.

The enzyme catalyses 3-(2,3-dihydroxyphenyl)propanoate + O2 = (2Z,4E)-2-hydroxy-6-oxonona-2,4-dienedioate + H(+). It carries out the reaction (2E)-3-(2,3-dihydroxyphenyl)prop-2-enoate + O2 = (2Z,4E,7E)-2-hydroxy-6-oxonona-2,4,7-trienedioate + H(+). It participates in aromatic compound metabolism; 3-phenylpropanoate degradation. Its function is as follows. Catalyzes the non-heme iron(II)-dependent oxidative cleavage of 2,3-dihydroxyphenylpropionic acid and 2,3-dihydroxicinnamic acid into 2-hydroxy-6-ketononadienedioate and 2-hydroxy-6-ketononatrienedioate, respectively. The polypeptide is 2,3-dihydroxyphenylpropionate/2,3-dihydroxicinnamic acid 1,2-dioxygenase (Paraburkholderia phymatum (strain DSM 17167 / CIP 108236 / LMG 21445 / STM815) (Burkholderia phymatum)).